We begin with the raw amino-acid sequence, 574 residues long: MSIEAAENLRAAEALLSALMGLGLQRVVLCPGSRSGPLALAASRLESHGLALTTGIDERSAGFFALGQTRADGQPTAVITTSGTAVANLLPAAVEADFSALPLLLLTADRPERLKACGANQTVNQEAYLQPACRALLQGPAAGLHDASDERLLRLAQSAMRHALGAPAGPVHLNLAFDEPLHADLSGLPAAAPPAAQELPPLFEPPGLGSLEPLDPDQPGVIVVGPWRRGHGGRFVAALQQLNRRTGWPILADASSGLRGLPLPLVSGYDLLLAEPQRLPPAHQVLRLGSMPASRRLQQWLQTFEGPQLVITEAEPRRQDPLASGCAQHPHGLAAWVELLPTGEPSATSRADAARWQQAESLLQQQLDHDLPLQGPCSEPALARALQNLIPSEWPVMLASSSPVRDWESFAGRQSGHRTIVSFRGASGIDGTLSLAAGIAQQWQRLVLVTGDLALLHDANGWLWRRQLSGELRLVVIDNGGGGVFEQLPIPRQSMDFDRLFAMPQSCDAMALAAAHGVAARDCSAMETLAADLQWLLEPGDAMRLLRCSTDRSRDAQLRQQLRDKPWWEQTPAP.

It belongs to the TPP enzyme family. MenD subfamily. In terms of assembly, homodimer. It depends on Mg(2+) as a cofactor. The cofactor is Mn(2+). Requires thiamine diphosphate as cofactor.

The enzyme catalyses isochorismate + 2-oxoglutarate + H(+) = 5-enolpyruvoyl-6-hydroxy-2-succinyl-cyclohex-3-ene-1-carboxylate + CO2. It participates in quinol/quinone metabolism; 1,4-dihydroxy-2-naphthoate biosynthesis; 1,4-dihydroxy-2-naphthoate from chorismate: step 2/7. The protein operates within cofactor biosynthesis; phylloquinone biosynthesis. In terms of biological role, catalyzes the thiamine diphosphate-dependent decarboxylation of 2-oxoglutarate and the subsequent addition of the resulting succinic semialdehyde-thiamine pyrophosphate anion to isochorismate to yield 2-succinyl-5-enolpyruvyl-6-hydroxy-3-cyclohexene-1-carboxylate (SEPHCHC). In Synechococcus sp. (strain RCC307), this protein is 2-succinyl-5-enolpyruvyl-6-hydroxy-3-cyclohexene-1-carboxylate synthase.